The chain runs to 171 residues: Large ribosomal subunit protein uL10 (171 aa).

It belongs to the universal ribosomal protein uL10 family. In terms of assembly, part of the ribosomal stalk of the 50S ribosomal subunit. The N-terminus interacts with L11 and the large rRNA to form the base of the stalk. The C-terminus forms an elongated spine to which L12 dimers bind in a sequential fashion forming a multimeric L10(L12)X complex.

Functionally, forms part of the ribosomal stalk, playing a central role in the interaction of the ribosome with GTP-bound translation factors. This chain is Large ribosomal subunit protein uL10, found in Corynebacterium glutamicum (strain R).